The chain runs to 474 residues: Dihydrolipoyl dehydrogenase (474 aa).

FAD-binding positions include 36–44 (EAKDMGGTC), lysine 53, and glycine 119. Cysteines 44 and 49 form a disulfide. Residues 184 to 188 (GSGYI), glutamate 207, and 275 to 278 (ATGR) contribute to the NAD(+) site. The FAD site is built by aspartate 323 and alanine 331. Histidine 459 functions as the Proton acceptor in the catalytic mechanism.

Belongs to the class-I pyridine nucleotide-disulfide oxidoreductase family. In terms of assembly, homodimer. The cofactor is FAD.

It is found in the cell inner membrane. The catalysed reaction is N(6)-[(R)-dihydrolipoyl]-L-lysyl-[protein] + NAD(+) = N(6)-[(R)-lipoyl]-L-lysyl-[protein] + NADH + H(+). Its function is as follows. Lipoamide dehydrogenase is a component of the alpha-ketoacid dehydrogenase complexes. This chain is Dihydrolipoyl dehydrogenase (lpdA), found in Synechocystis sp. (strain ATCC 27184 / PCC 6803 / Kazusa).